Reading from the N-terminus, the 1134-residue chain is MSEPHRVQFTSLPGSLNPAFLKKSRKEEAGAGEQHQDCEPAAAAVRITLTLFEPDHKRCPEFFYPELVKNIRGKVKGLQPGDKKKDLSDPFNDEEKERHKVEALARKFEEKYGGKKRRKDRIQDLIDMGYGYDESDSFIDNSEAYDELVPASLTTKYGGFYINSGTLQFRQASESEDDFIKEKKKKSPKKRKLKEGGEKIKKKKKDDTYDKEKKSKKSKFSKAGFTALNASKEKKKKKYSGALSVKEMLKKFQKEKEAQKKREEEHKPVAVPSAEAQGLRELEGASDPLLSLFGSTSDNDLLQAATAMDSLTDLDLEHLLSESPEGSPFRDMDDGSDSLGVGLDQEFRQPSSLPEGLPAPLEKRVKELAQAARAAEGESRQKFFTQDINGILLDIEAQTRELSSQVRSGVYAYLASFLPCSKDALLKRARKLHLYEQGGRLKEPLQKLKEAIGRAMPEQMAKYQDECQAHTQAKVAKMLEEEKDKEQRDRICSDEEEDEEKGGRRIMGPRKKFQWNDEIRELLCQVVKIKLESQDLERNNKAQAWEDCVKGFLDAEVKPLWPKGWMQARTLFKESRRGHGHLTSILAKKKVMAPSKIKVKESSTKPDKKVSVPSGQIGGPIALPSDHQTGGLSIGASSRELPSQASGGLANPPPVNLEDSLDEDLIRNPASSVEAVSKELAALNSRAAGNSEFTLPAPSKAPAEKVGGVLCTEEKRNFAKPSPSAPPPASSLQSPLNFLAEQALALGQSSQEKKPESSGYKELSCQAPLNKGLPEVHQSKAKHHSLPRTSHGPQVAVPVPGPQVKVFHAGTQQQKNFTPPSPFANKLQGPKASPTQCHRSLLQLVKTAAKGQGFHPSAPATSGGLSASSSSSHKTPASSSSALSHPAKPHSVSSAGSSYKNNPFASSISKHGVSSGSSSSGGTPVQSSVSGSLVPGIQPPSVGQATSRPVPSSAGKKMPVSQKLTLVAPPGGPNGDSSGGTQGVAKLLTSPSLKPSAVSSVTSSTSLSKGASGTVLLAGSSLMASPYKSSSPKLSGAMSSNSLGIITPVPIPVHVLSFSADSSAKAGVSKDAIVTGPAPGSFHHGLGHSLLAGLHSSPPHAAPLPHAAVPTHIPQSLPGASQLHGKGPAVPRKL.

Disordered regions lie at residues 1-38 (MSEPHRVQFTSLPGSLNPAFLKKSRKEEAGAGEQHQDC) and 78-98 (LQPGDKKKDLSDPFNDEEKER). The interval 1 to 166 (MSEPHRVQFT…YGGFYINSGT (166 aa)) is sufficient for interaction with HIRA. Composition is skewed to basic and acidic residues over residues 25–38 (RKEEAGAGEQHQDC) and 81–98 (GDKKKDLSDPFNDEEKER). T166 carries the post-translational modification Phosphothreonine. The disordered stretch occupies residues 171–220 (QASESEDDFIKEKKKKSPKKRKLKEGGEKIKKKKKDDTYDKEKKSKKSKF). 2 positions are modified to phosphoserine: S173 and S175. The span at 182–193 (EKKKKSPKKRKL) shows a compositional bias: basic residues. A compositionally biased stretch (basic and acidic residues) spans 194-213 (KEGGEKIKKKKKDDTYDKEK). K222 carries the post-translational modification N6-acetyllysine. Positions 253–268 (QKEKEAQKKREEEHKP) are enriched in basic and acidic residues. Disordered regions lie at residues 253 to 282 (QKEKEAQKKREEEHKPVAVPSAEAQGLREL), 321 to 358 (SESPEGSPFRDMDDGSDSLGVGLDQEFRQPSSLPEGLP), 480 to 504 (EEEKDKEQRDRICSDEEEDEEKGGR), and 594 to 660 (PSKI…LEDS). S323, S336, S338, and S493 each carry phosphoserine. Residues 479–542 (LEEEKDKEQR…SQDLERNNKA (64 aa)) adopt a coiled-coil conformation. Composition is skewed to basic and acidic residues over residues 480–493 (EEEKDKEQRDRICS) and 598–610 (KVKESSTKPDKKV). S660 and S677 each carry phosphoserine. Disordered stretches follow at residues 712-836 (TEEK…SPTQ) and 852-986 (QGFH…GVAK). Composition is skewed to low complexity over residues 792-804 (GPQVAVPVPGPQV) and 856-891 (PSAPATSGGLSASSSSSHKTPASSSSALSHPAKPHS). Positions 892–905 (VSSAGSSYKNNPFA) are enriched in polar residues. A compositionally biased stretch (low complexity) spans 906–932 (SSISKHGVSSGSSSSGGTPVQSSVSGS). Residues 941–950 (SVGQATSRPV) are compositionally biased toward polar residues. Over residues 973–982 (PNGDSSGGTQ) the composition is skewed to gly residues. A Phosphoserine modification is found at S1025. Low complexity predominate over residues 1093 to 1108 (GLHSSPPHAAPLPHAA). The tract at residues 1093 to 1134 (GLHSSPPHAAPLPHAAVPTHIPQSLPGASQLHGKGPAVPRKL) is disordered.

It belongs to the ubinuclein family. In terms of assembly, component of a complex that includes at least ASF1A, CABIN1, HIRA, histone H3.3 and UBN1. Interacts with HIRA (via WD repeat domain); the interaction is direct. Interacts with ASF1A, CEBPA, TJP1, TJP2 and TJP3. As to quaternary structure, (Microbial infection) Interacts with Epstein-Barr virus BZLF1. In terms of tissue distribution, ubiquitous. Also expressed in numerous tumors and cancer cell lines.

Its subcellular location is the nucleus. The protein localises to the nucleoplasm. It is found in the PML body. The protein resides in the cell junction. It localises to the tight junction. Functionally, acts as a novel regulator of senescence. Involved in the formation of senescence-associated heterochromatin foci (SAHF), which represses expression of proliferation-promoting genes. Binds to proliferation-promoting genes. May be required for replication-independent chromatin assembly. In Homo sapiens (Human), this protein is Ubinuclein-1 (UBN1).